Consider the following 2287-residue polypeptide: Protein Ycf2 (2287 aa).

1641 to 1648 is a binding site for ATP; sequence GSIGTGRS.

It belongs to the Ycf2 family.

The protein resides in the plastid. Its subcellular location is the chloroplast stroma. In terms of biological role, probable ATPase of unknown function. Its presence in a non-photosynthetic plant (Epifagus virginiana) and experiments in tobacco indicate that it has an essential function which is probably not related to photosynthesis. The sequence is that of Protein Ycf2 from Lepidium virginicum (Virginia pepperweed).